The sequence spans 39 residues: Cytochrome b6-f complex subunit 5 (39 aa).

The chain crosses the membrane as a helical span at residues 5–25 (LLCGIVLGLVPITIVGLFVSA).

The protein belongs to the PetG family. As to quaternary structure, the 4 large subunits of the cytochrome b6-f complex are cytochrome b6, subunit IV (17 kDa polypeptide, PetD), cytochrome f and the Rieske protein, while the 4 small subunits are PetG, PetL, PetM and PetN. The complex functions as a dimer.

It localises to the cellular thylakoid membrane. In terms of biological role, component of the cytochrome b6-f complex, which mediates electron transfer between photosystem II (PSII) and photosystem I (PSI), cyclic electron flow around PSI, and state transitions. PetG is required for either the stability or assembly of the cytochrome b6-f complex. The protein is Cytochrome b6-f complex subunit 5 of Prochlorococcus marinus (strain MIT 9211).